The chain runs to 212 residues: Thymidylate kinase (212 aa).

10–17 serves as a coordination point for ATP; the sequence is GPDGSGKS.

The protein belongs to the thymidylate kinase family.

It catalyses the reaction dTMP + ATP = dTDP + ADP. Its function is as follows. Phosphorylation of dTMP to form dTDP in both de novo and salvage pathways of dTTP synthesis. In Exiguobacterium sp. (strain ATCC BAA-1283 / AT1b), this protein is Thymidylate kinase.